A 320-amino-acid chain; its full sequence is NAC domain-containing protein 18 (320 aa).

The segment at 1 to 22 is disordered; it reads MESTDSSGGPPPPQPNLPPGFR. The segment covering 9–18 has biased composition (pro residues); the sequence is GPPPPQPNLP. The NAC domain maps to 17–177; it reads LPPGFRFHPT…DWVLCRIYKK (161 aa). A DNA-binding region spans residues 118–183; the sequence is VGVKKALVFY…IYKKNNSTAS (66 aa).

Restricted primarily to the region of the embryo including the SAM. Expressed in the outer integument, but seems not expressed in the embryo at the torpedo stage.

The protein localises to the nucleus. Its function is as follows. May encode a transcription factor involved in the elaboration of shoot apical meristems (SAM). Together with NAC056/NARS1, regulates embryogenesis by regulating the development and degeneration of ovule integuments, a process required for intertissue communication between the embryo and the maternal integument. This is NAC domain-containing protein 18 (NAC018) from Arabidopsis thaliana (Mouse-ear cress).